Consider the following 567-residue polypeptide: Urease subunit alpha (567 aa).

The Urease domain occupies 129 to 567 (GGIDVHVHFI…VPMSQRYFLF (439 aa)). Positions 134, 136, and 217 each coordinate Ni(2+). The residue at position 217 (Lys-217) is an N6-carboxylysine. Residue His-219 coordinates substrate. Residues His-246 and His-272 each contribute to the Ni(2+) site. His-320 (proton donor) is an active-site residue. Asp-360 serves as a coordination point for Ni(2+).

It belongs to the metallo-dependent hydrolases superfamily. Urease alpha subunit family. As to quaternary structure, heterotrimer of UreA (gamma), UreB (beta) and UreC (alpha) subunits. Three heterotrimers associate to form the active enzyme. The cofactor is Ni cation. Carboxylation allows a single lysine to coordinate two nickel ions.

It localises to the cytoplasm. The catalysed reaction is urea + 2 H2O + H(+) = hydrogencarbonate + 2 NH4(+). The protein operates within nitrogen metabolism; urea degradation; CO(2) and NH(3) from urea (urease route): step 1/1. In Blochmanniella floridana, this protein is Urease subunit alpha.